Reading from the N-terminus, the 64-residue chain is Bactridin-2 (64 aa).

An LCN-type CS-alpha/beta domain is found at 1 to 63 (KDGYLVGNDG…TWNRATNRCG (63 aa)). 4 disulfide bridges follow: Cys-11-Cys-62, Cys-15-Cys-37, Cys-23-Cys-43, and Cys-27-Cys-45.

It belongs to the long (4 C-C) scorpion toxin superfamily. Sodium channel inhibitor family. Beta subfamily. In terms of tissue distribution, expressed by the venom gland.

It is found in the secreted. Its function is as follows. Shows antibacterial activity against both Gram-positive bacteria (B.subtilis, M.luteus, E.faecalis) and Gram-negative bacteria (P.aeruginosa, Y.enterocolitica, A.calcoaceticus). Modifies membrane sodium permeability on Y.enterocolitica. Is toxic to mice, but is not to crabs. Induces concentration dependent haemolysis in human erythrocytes. Acts by inhibiting the sodium (Nav) currents. The protein is Bactridin-2 of Tityus discrepans (Venezuelan scorpion).